The sequence spans 144 residues: Snake venom vascular endothelial growth factor toxin VR-1 (144 aa).

The N-terminal stretch at 1–24 (MAAYLLAVAILFCIQGWPSGTVQG) is a signal peptide. Q25 is modified (pyrrolidone carboxylic acid). Disulfide bonds link C38–C80, C69–C115, and C73–C117. Residues 120–134 (RWKQGEPEGPKEPRR) are compositionally biased toward basic and acidic residues. The tract at residues 120–144 (RWKQGEPEGPKEPRRGGVRAKFPFD) is disordered. Positions 134 to 144 (RGGVRAKFPFD) are excised as a propeptide.

The protein belongs to the PDGF/VEGF growth factor family. Snake venom VEGF subfamily. Homodimer; disulfide-linked. Interacts with VEGF receptor-2 (KDR) with high affinity, but not with VEGF receptor-1 (Flt-1), VEGF receptor-3 (FLT4), and neuropilin-1 (NRP1). In terms of tissue distribution, expressed by the venom gland.

The protein localises to the secreted. Its function is as follows. Snake venom VEGFs may contribute to venom dispersion and prey subjugation by inducing vascular permeability and hypotension. This protein induces angiogenesis probably through VEGF receptor (KDR/VEGFR-2) signaling, as well as drastic hypotension. The hypotension is mediated by nitric oxide, which is produced by VEGF-activated endothelium NO synthase. May also induce vascular permeability. The sequence is that of Snake venom vascular endothelial growth factor toxin VR-1 from Daboia russelii (Russel's viper).